We begin with the raw amino-acid sequence, 373 residues long: Carnosine N-methyltransferase (373 aa).

S-adenosyl-L-methionine-binding residues include glutamine 110, arginine 113, glycine 154, glutamate 175, aspartate 242, phenylalanine 243, and cysteine 262. Position 266 (aspartate 266) interacts with carnosine. An S-adenosyl-L-methionine-binding site is contributed by tyrosine 274. Carnosine is bound by residues histidine 297 and tyrosine 356.

This sequence belongs to the carnosine N-methyltransferase family.

The protein resides in the cytoplasm. Its subcellular location is the nucleus. The enzyme catalyses carnosine + S-adenosyl-L-methionine = anserine + S-adenosyl-L-homocysteine + H(+). Its function is as follows. N-methyltransferase that mediates the formation of anserine (beta-alanyl-N(Pi)-methyl-L-histidine) from carnosine. Also methylates other L-histidine-containing di- and tripeptides such as Gly-Gly-His, Gly-His and homocarnosine (GABA-His). This chain is Carnosine N-methyltransferase, found in Schizosaccharomyces pombe (strain 972 / ATCC 24843) (Fission yeast).